A 351-amino-acid polypeptide reads, in one-letter code: DNA-directed RNA polymerase subunit alpha (351 aa).

Positions 1–236 (MSVNTKNWQE…DQLTLFVHFE (236 aa)) are alpha N-terminal domain (alpha-NTD). The segment at 256–351 (DDANQLNRYL…AKKLEQELLG (96 aa)) is alpha C-terminal domain (alpha-CTD).

The protein belongs to the RNA polymerase alpha chain family. As to quaternary structure, homodimer. The RNAP catalytic core consists of 2 alpha, 1 beta, 1 beta' and 1 omega subunit. When a sigma factor is associated with the core the holoenzyme is formed, which can initiate transcription.

The catalysed reaction is RNA(n) + a ribonucleoside 5'-triphosphate = RNA(n+1) + diphosphate. Functionally, DNA-dependent RNA polymerase catalyzes the transcription of DNA into RNA using the four ribonucleoside triphosphates as substrates. This is DNA-directed RNA polymerase subunit alpha from Erythrobacter litoralis (strain HTCC2594).